Reading from the N-terminus, the 76-residue chain is DNA-directed RNA polymerase subunit epsilon (76 aa).

The protein belongs to the RNA polymerase subunit epsilon family. RNAP is composed of a core of 2 alpha, a beta and a beta' subunit. The core is associated with a delta subunit, and at least one of epsilon or omega. When a sigma factor is associated with the core the holoenzyme is formed, which can initiate transcription.

It catalyses the reaction RNA(n) + a ribonucleoside 5'-triphosphate = RNA(n+1) + diphosphate. Its function is as follows. A non-essential component of RNA polymerase (RNAP). The polypeptide is DNA-directed RNA polymerase subunit epsilon (Streptococcus mutans serotype c (strain ATCC 700610 / UA159)).